An 877-amino-acid chain; its full sequence is Phosphoenolpyruvate carboxylase (877 aa).

Residues His-138 and Lys-544 contribute to the active site.

The protein belongs to the PEPCase type 1 family. It depends on Mg(2+) as a cofactor.

The catalysed reaction is oxaloacetate + phosphate = phosphoenolpyruvate + hydrogencarbonate. In terms of biological role, forms oxaloacetate, a four-carbon dicarboxylic acid source for the tricarboxylic acid cycle. This chain is Phosphoenolpyruvate carboxylase, found in Vibrio parahaemolyticus serotype O3:K6 (strain RIMD 2210633).